The following is a 1222-amino-acid chain: Protein SCP160 (1222 aa).

Residues 1–12 (MSEEQTAIDSPP) show a composition bias toward polar residues. The segment at 1-59 (MSEEQTAIDSPPSTVEGSVETVTTIDSPSTTASTIAATAEEHPQLEKKPTPLPSLKDLP) is disordered. The span at 13 to 38 (STVEGSVETVTTIDSPSTTASTIAAT) shows a compositional bias: low complexity. Residues 39-49 (AEEHPQLEKKP) are compositionally biased toward basic and acidic residues. A Phosphothreonine modification is found at Thr-50. Phosphoserine is present on residues Ser-54, Ser-63, Ser-85, Ser-87, and Ser-89. The interval 79–98 (KPAVSNSPSPSPSAPSLTTG) is disordered. The region spanning 177–249 (PINAVIEVPS…ESVNLAKAKI (73 aa)) is the KH 1 domain. At Ser-630 the chain carries Phosphoserine. KH domains follow at residues 634–702 (KSKM…KKYL), 712–771 (IITK…HEEL), 782–851 (GHKM…AKRV), 861–929 (FVTE…VEEI), and 939–1001 (SVTK…EKKI). Residue Ser-1112 is modified to Phosphoserine. The KH 7 domain maps to 1153–1216 (YAGYVWGADT…AGVEKAGEMV (64 aa)).

It localises to the endoplasmic reticulum membrane. The protein resides in the nucleus membrane. Involved in the control of mitotic chromosome transmission. Required during cell division for faithful partitioning of the ER-nuclear envelope membranes which, in S.cerevisiae, enclose the duplicated chromosomes. This is Protein SCP160 (SCP160) from Saccharomyces cerevisiae (strain ATCC 204508 / S288c) (Baker's yeast).